The primary structure comprises 23 residues: Dahlein-4.1 (23 aa).

Expressed by the skin dorsal glands.

It is found in the secreted. Its function is as follows. Has no antimicrobial activity. This chain is Dahlein-4.1, found in Ranoidea dahlii (Dahl's aquatic frog).